A 264-amino-acid chain; its full sequence is 3-methyl-2-oxobutanoate hydroxymethyltransferase (264 aa).

Aspartate 45 and aspartate 84 together coordinate Mg(2+). 3-methyl-2-oxobutanoate contacts are provided by residues aspartate 45–serine 46, aspartate 84, and lysine 112. Glutamate 114 lines the Mg(2+) pocket. Catalysis depends on glutamate 181, which acts as the Proton acceptor.

Belongs to the PanB family. In terms of assembly, homodecamer; pentamer of dimers. Requires Mg(2+) as cofactor.

The protein localises to the cytoplasm. It carries out the reaction 3-methyl-2-oxobutanoate + (6R)-5,10-methylene-5,6,7,8-tetrahydrofolate + H2O = 2-dehydropantoate + (6S)-5,6,7,8-tetrahydrofolate. Its pathway is cofactor biosynthesis; (R)-pantothenate biosynthesis; (R)-pantoate from 3-methyl-2-oxobutanoate: step 1/2. Its function is as follows. Catalyzes the reversible reaction in which hydroxymethyl group from 5,10-methylenetetrahydrofolate is transferred onto alpha-ketoisovalerate to form ketopantoate. The chain is 3-methyl-2-oxobutanoate hydroxymethyltransferase from Colwellia psychrerythraea (strain 34H / ATCC BAA-681) (Vibrio psychroerythus).